Consider the following 89-residue polypeptide: MTIRNQRFSLLKQPISSTLNQHLVDYPTPSNLSYWWGFGPLAGICLVIQIVTGVFLAMHYTPHVDLAFNSVEHIMRDVEGGWLLRYMHA.

2 consecutive transmembrane segments (helical) span residues 38–58 (FGPLAGICLVIQIVTGVFLAM) and 82–89 (WLLRYMHA). His-88 is a binding site for heme b.

It belongs to the cytochrome b family. In terms of assembly, the main subunits of complex b-c1 are: cytochrome b, cytochrome c1 and the Rieske protein. It depends on heme b as a cofactor.

It is found in the mitochondrion inner membrane. Functionally, component of the ubiquinol-cytochrome c reductase complex (complex III or cytochrome b-c1 complex) that is part of the mitochondrial respiratory chain. The b-c1 complex mediates electron transfer from ubiquinol to cytochrome c. Contributes to the generation of a proton gradient across the mitochondrial membrane that is then used for ATP synthesis. The protein is Cytochrome b (MT-CYB) of Brassica napus (Rape).